A 328-amino-acid chain; its full sequence is Ribosomal RNA small subunit methyltransferase H (328 aa).

S-adenosyl-L-methionine-binding positions include 37 to 39 (GGH), Asp-57, Phe-83, Asp-104, and Gln-111.

It belongs to the methyltransferase superfamily. RsmH family.

It localises to the cytoplasm. It carries out the reaction cytidine(1402) in 16S rRNA + S-adenosyl-L-methionine = N(4)-methylcytidine(1402) in 16S rRNA + S-adenosyl-L-homocysteine + H(+). In terms of biological role, specifically methylates the N4 position of cytidine in position 1402 (C1402) of 16S rRNA. This is Ribosomal RNA small subunit methyltransferase H from Neisseria meningitidis serogroup C / serotype 2a (strain ATCC 700532 / DSM 15464 / FAM18).